We begin with the raw amino-acid sequence, 251 residues long: uncharacterized protein (251 aa).

An N-terminal signal peptide occupies residues 1–25; it reads MSAGRLNKKSLGIVMLLSVGLLLAG. Residue cysteine 26 is the site of N-palmitoyl cysteine attachment. A lipid anchor (S-diacylglycerol cysteine) is attached at cysteine 26. The region spanning 40-84 is the LysM domain; sequence SVYTVKRGDTLYRISRTTGTSVKELARLNGISPPYTIEVGQKLKL. Low complexity predominate over residues 93-112; it reads TRKSTAKSTTKTASVTPSSA. The tract at residues 93-115 is disordered; the sequence is TRKSTAKSTTKTASVTPSSAVPK.

Belongs to the peptidase M23B family.

Its subcellular location is the cell inner membrane. This is an uncharacterized protein from Escherichia coli (strain K12).